The chain runs to 308 residues: Probable 5-dehydro-4-deoxyglucarate dehydratase (308 aa).

Belongs to the DapA family.

It carries out the reaction 5-dehydro-4-deoxy-D-glucarate + H(+) = 2,5-dioxopentanoate + CO2 + H2O. It participates in carbohydrate acid metabolism; D-glucarate degradation; 2,5-dioxopentanoate from D-glucarate: step 2/2. In Oceanobacillus iheyensis (strain DSM 14371 / CIP 107618 / JCM 11309 / KCTC 3954 / HTE831), this protein is Probable 5-dehydro-4-deoxyglucarate dehydratase.